Here is a 447-residue protein sequence, read N- to C-terminus: Ribosomal protein uS12 methylthiotransferase RimO (447 aa).

The region spanning 4–114 (PKVGFVSLGC…VMEAVHEYVP (111 aa)) is the MTTase N-terminal domain. [4Fe-4S] cluster-binding residues include C13, C49, C78, C147, C151, and C154. The region spanning 133 to 370 (LTPKHYAYLK…MQVQQQISAA (238 aa)) is the Radical SAM core domain. The region spanning 373 to 443 (QKRIGQTMTV…EYDLFAKLIK (71 aa)) is the TRAM domain.

Belongs to the methylthiotransferase family. RimO subfamily. Requires [4Fe-4S] cluster as cofactor.

It is found in the cytoplasm. The catalysed reaction is L-aspartate(89)-[ribosomal protein uS12]-hydrogen + (sulfur carrier)-SH + AH2 + 2 S-adenosyl-L-methionine = 3-methylsulfanyl-L-aspartate(89)-[ribosomal protein uS12]-hydrogen + (sulfur carrier)-H + 5'-deoxyadenosine + L-methionine + A + S-adenosyl-L-homocysteine + 2 H(+). Catalyzes the methylthiolation of an aspartic acid residue of ribosomal protein uS12. The polypeptide is Ribosomal protein uS12 methylthiotransferase RimO (Acinetobacter baumannii (strain SDF)).